A 501-amino-acid polypeptide reads, in one-letter code: NAD(P)H-quinone oxidoreductase subunit 2, chloroplastic (501 aa).

The next 14 helical transmembrane spans lie at 15-35 (ILPE…DLTF), 40-60 (TIWL…ILLF), 82-102 (IFQS…IEYI), 107-127 (MAIP…MFLC), 132-152 (LVTI…LCGY), 167-187 (LLIG…LYGL), 212-232 (TFIA…LVPF), 244-264 (PTPV…ALAT), 278-298 (WKIF…LVAI), 307-327 (LAYS…TGDL), 333-353 (MTIY…CIIL), 378-398 (FSLT…GFFG), 410-430 (GFYL…YYYL), and 466-486 (FVMI…NPIF).

It belongs to the complex I subunit 2 family. In terms of assembly, NDH is composed of at least 16 different subunits, 5 of which are encoded in the nucleus.

The protein localises to the plastid. Its subcellular location is the chloroplast thylakoid membrane. It catalyses the reaction a plastoquinone + NADH + (n+1) H(+)(in) = a plastoquinol + NAD(+) + n H(+)(out). The catalysed reaction is a plastoquinone + NADPH + (n+1) H(+)(in) = a plastoquinol + NADP(+) + n H(+)(out). In terms of biological role, NDH shuttles electrons from NAD(P)H:plastoquinone, via FMN and iron-sulfur (Fe-S) centers, to quinones in the photosynthetic chain and possibly in a chloroplast respiratory chain. The immediate electron acceptor for the enzyme in this species is believed to be plastoquinone. Couples the redox reaction to proton translocation, and thus conserves the redox energy in a proton gradient. The protein is NAD(P)H-quinone oxidoreductase subunit 2, chloroplastic of Marchantia polymorpha (Common liverwort).